The primary structure comprises 366 residues: D-alanine--D-alanine ligase A (366 aa).

The ATP-grasp domain occupies 145–348 (KRLLRDAGLK…YRELITALIE (204 aa)). 175 to 230 (VEQLGLPLFVKPANQGSSVGVSKVKREADLRAALDEAFRYDHKVLVEQAVIGREIE) contributes to the ATP binding site. Residues Asp-302, Glu-315, and Asn-317 each coordinate Mg(2+).

The protein belongs to the D-alanine--D-alanine ligase family. Requires Mg(2+) as cofactor. Mn(2+) serves as cofactor.

The protein resides in the cytoplasm. It catalyses the reaction 2 D-alanine + ATP = D-alanyl-D-alanine + ADP + phosphate + H(+). The protein operates within cell wall biogenesis; peptidoglycan biosynthesis. Cell wall formation. This chain is D-alanine--D-alanine ligase A, found in Chromobacterium violaceum (strain ATCC 12472 / DSM 30191 / JCM 1249 / CCUG 213 / NBRC 12614 / NCIMB 9131 / NCTC 9757 / MK).